The following is a 153-amino-acid chain: Bifunctional protein GAL10 (153 aa).

The galactowaldenase stretch occupies residues 1–153; that stretch reads MSDDIFLVTG…IPIPEHCPME (153 aa).

This sequence in the N-terminal section; belongs to the NAD(P)-dependent epimerase/dehydratase family. It in the C-terminal section; belongs to the aldose epimerase family. NAD(+) serves as cofactor.

The catalysed reaction is UDP-alpha-D-glucose = UDP-alpha-D-galactose. It carries out the reaction alpha-D-glucose = beta-D-glucose. It participates in carbohydrate metabolism; galactose metabolism. Its pathway is carbohydrate metabolism; hexose metabolism. Functionally, mutarotase converts alpha-aldose to the beta-anomer. It is active on D-glucose, L-arabinose, D-xylose, D-galactose, maltose and lactose. This chain is Bifunctional protein GAL10 (GAL10), found in Candida maltosa (Yeast).